Here is a 327-residue protein sequence, read N- to C-terminus: Vacuolar protein sorting-associated protein 26A (327 aa).

Positions 306 to 327 (RTNFHQRFESPESQASAEQPEM) are disordered. S315 is subject to Phosphoserine. The segment covering 316–327 (PESQASAEQPEM) has biased composition (polar residues).

The protein belongs to the VPS26 family. Component of the heterotrimeric retromer cargo-selective complex (CSC), also described as vacuolar protein sorting subcomplex (VPS), formed by VPS26 (VPS26A or VPS26B), VPS29 and VPS35. The CSC has a highly elongated structure with VPS26 and VPS29 binding independently at opposite distal ends of VPS35 as central platform. The CSC is believed to associate with variable sorting nexins to form functionally distinct retromer complex variants. The originally described retromer complex (also called SNX-BAR retromer) is a pentamer containing the CSC and a heterodimeric membrane-deforming subcomplex formed between SNX1 or SNX2 and SNX5 or SNX6 (also called SNX-BAR subcomplex); the respective CSC and SNX-BAR subcomplexes associate with low affinity. The CSC associates with SNX3 to form a SNX3-retromer complex. The CSC associates with SNX27, the WASH complex and the SNX-BAR subcomplex to form the SNX27-retromer complex. Interacts with VPS29, VPS35, SNX27, SNX1, SNX2, SNX5, SNX6, SNX3, RAB7A, ECPAS, EHD1, WASHC5, SORL1.

It is found in the cytoplasm. The protein localises to the endosome membrane. It localises to the early endosome. In terms of biological role, acts as a component of the retromer cargo-selective complex (CSC). The CSC is believed to be the core functional component of retromer or respective retromer complex variants acting to prevent missorting of selected transmembrane cargo proteins into the lysosomal degradation pathway. The recruitment of the CSC to the endosomal membrane involves RAB7A and SNX3. The SNX-BAR retromer mediates retrograde transport of cargo proteins from endosomes to the trans-Golgi network (TGN) and is involved in endosome-to-plasma membrane transport for cargo protein recycling. The SNX3-retromer mediates the retrograde endosome-to-TGN transport of WLS distinct from the SNX-BAR retromer pathway. The SNX27-retromer is believed to be involved in endosome-to-plasma membrane trafficking and recycling of a broad spectrum of cargo proteins. The CSC complex seems to act as recruitment hub for other proteins, such as the WASH complex and TBC1D5. Required for retrograde transport of lysosomal enzyme receptor IGF2R. Required to regulate transcytosis of the polymeric immunoglobulin receptor (pIgR-pIgA). Required for the endosomal localization of WASHC2 (indicative for the WASH complex). Required for the endosomal localization of TBC1D5. Mediates retromer cargo recognition of SORL1 and is involved in trafficking of SORL1 implicated in sorting and processing of APP. Involved in retromer-independent lysosomal sorting of F2R. Involved in recycling of ADRB2. Acts redundantly with VSP26B in SNX-27 mediated endocytic recycling of SLC2A1/GLUT1. Enhances the affinity of SNX27 for PDZ-binding motifs in cargo proteins. This chain is Vacuolar protein sorting-associated protein 26A (VPS26A), found in Bos taurus (Bovine).